Consider the following 200-residue polypeptide: Cell division protein SepF (200 aa).

2 disordered regions span residues 35–60 (NLYQ…RWRE) and 170–200 (LHEV…RMAQ). A compositionally biased stretch (polar residues) spans 183-200 (PTGSPNQTWGNETNRMAQ).

This sequence belongs to the SepF family. As to quaternary structure, homodimer. Interacts with FtsZ.

It localises to the cytoplasm. In terms of biological role, cell division protein that is part of the divisome complex and is recruited early to the Z-ring. Probably stimulates Z-ring formation, perhaps through the cross-linking of FtsZ protofilaments. Its function overlaps with FtsA. The protein is Cell division protein SepF of Nostoc punctiforme (strain ATCC 29133 / PCC 73102).